Here is an 88-residue protein sequence, read N- to C-terminus: Arminin 1a (88 aa).

Positions 1–18 (MKTVLAFLFLPFIAFTHA) are cleaved as a signal peptide. Positions 19 to 57 (ESYEDVKEEIKNEAEKEIFEDLEEESDALDSSVREFNDA) are excised as a propeptide. At Val-85 the chain carries Valine amide.

The protein belongs to the arminin family. In terms of tissue distribution, expressed in entodermal epithelium along the body column.

The protein localises to the secreted. It localises to the target cell membrane. In terms of biological role, antimicrobial peptide with a broad-spectrum antimicrobial activity. Shows very strong bactericidal activity against B.megaterium (MBC=0.1 uM), E.coli (MBC=0.2 uM), S.aureus (MBC=0.4 uM), methicillin-resistant S.aureus (MRSA) (MBC=0.4-0.8 uM), vancomycin-resistant enterococci (VRE) (E.faecalis (MBC=1.6 uM), and E.faecium (MBC=0.4-0.8 uM)), and extended-spectrum beta-lactamase (ESBL)-producing enterobacteriaceae strains (K.pneumoniae (MBC=0.4-0.8 uM), E.coli (MBC=0.2-0.4 uM)). Keeps its antibacterial activity under a wide range of salt concentrations that mimic physiological conditions of human blood, which is surprising, since Hydra is an obligate freshwater animal with nearly no salt tolerance. Does not affect red blood cells. The polypeptide is Arminin 1a (Hydra vulgaris (Hydra)).